A 190-amino-acid polypeptide reads, in one-letter code: Flavodoxin-like domain-containing protein BilS (190 aa).

Its pathway is porphyrin-containing compound metabolism; protoheme degradation. Its function is as follows. Together with BilR, catalyzes reduction of mesobilirubin and/or bilirubin to urobilinogen, a key step during heme degradation. BilS is probably involved in electron transfer for the bilirubin reductase BilR. This chain is Flavodoxin-like domain-containing protein BilS, found in Clostridium symbiosum (strain WAL-14163).